Reading from the N-terminus, the 239-residue chain is Pyridoxine 5'-phosphate synthase (239 aa).

N7 serves as a coordination point for 3-amino-2-oxopropyl phosphate. Residue 9–10 (DH) participates in 1-deoxy-D-xylulose 5-phosphate binding. Position 18 (R18) interacts with 3-amino-2-oxopropyl phosphate. H43 serves as the catalytic Proton acceptor. 1-deoxy-D-xylulose 5-phosphate contacts are provided by R45 and H50. E70 serves as the catalytic Proton acceptor. 1-deoxy-D-xylulose 5-phosphate is bound at residue T100. Residue H191 is the Proton donor of the active site. 3-amino-2-oxopropyl phosphate is bound by residues G192 and 213 to 214 (GH).

It belongs to the PNP synthase family. In terms of assembly, homooctamer; tetramer of dimers.

Its subcellular location is the cytoplasm. The enzyme catalyses 3-amino-2-oxopropyl phosphate + 1-deoxy-D-xylulose 5-phosphate = pyridoxine 5'-phosphate + phosphate + 2 H2O + H(+). It functions in the pathway cofactor biosynthesis; pyridoxine 5'-phosphate biosynthesis; pyridoxine 5'-phosphate from D-erythrose 4-phosphate: step 5/5. Functionally, catalyzes the complicated ring closure reaction between the two acyclic compounds 1-deoxy-D-xylulose-5-phosphate (DXP) and 3-amino-2-oxopropyl phosphate (1-amino-acetone-3-phosphate or AAP) to form pyridoxine 5'-phosphate (PNP) and inorganic phosphate. The chain is Pyridoxine 5'-phosphate synthase from Syntrophotalea carbinolica (strain DSM 2380 / NBRC 103641 / GraBd1) (Pelobacter carbinolicus).